Consider the following 267-residue polypeptide: NAD kinase 1 (267 aa).

The active-site Proton acceptor is the Asp-45. Residues 45–46, 122–123, Arg-149, Asp-151, and Ala-186 contribute to the NAD(+) site; these read DG and NE.

Belongs to the NAD kinase family. A divalent metal cation is required as a cofactor.

It localises to the cytoplasm. The enzyme catalyses NAD(+) + ATP = ADP + NADP(+) + H(+). In terms of biological role, involved in the regulation of the intracellular balance of NAD and NADP, and is a key enzyme in the biosynthesis of NADP. Catalyzes specifically the phosphorylation on 2'-hydroxyl of the adenosine moiety of NAD to yield NADP. This chain is NAD kinase 1, found in Oceanobacillus iheyensis (strain DSM 14371 / CIP 107618 / JCM 11309 / KCTC 3954 / HTE831).